Reading from the N-terminus, the 29-residue chain is Small toxic protein ZorP (29 aa).

The helical transmembrane segment at 10 to 27 threads the bilayer; sequence VLIAVLELLVALLRLIDL.

It localises to the membrane. In terms of biological role, toxic component of a type I toxin-antitoxin (TA) system. Overexpression leads to cell stasis and a decrease in colony-forming units. Probably repressed by cognate small RNA orzP. Base pairing occurs between 18 bases in the 5' UTR of zorP mRNA and the 5' end of OrzP sRNA. This Escherichia coli O157:H7 protein is Small toxic protein ZorP.